The primary structure comprises 244 residues: tRNA uridine(34) hydroxylase (244 aa).

Residues 129-219 (QGRELVMLDT…GILKYFEETD (91 aa)) form the Rhodanese domain. Cys-183 functions as the Cysteine persulfide intermediate in the catalytic mechanism.

The protein belongs to the TrhO family.

It catalyses the reaction uridine(34) in tRNA + AH2 + O2 = 5-hydroxyuridine(34) in tRNA + A + H2O. Functionally, catalyzes oxygen-dependent 5-hydroxyuridine (ho5U) modification at position 34 in tRNAs. The protein is tRNA uridine(34) hydroxylase of Bordetella bronchiseptica (strain ATCC BAA-588 / NCTC 13252 / RB50) (Alcaligenes bronchisepticus).